The primary structure comprises 341 residues: Ketol-acid reductoisomerase (NADP(+)) (341 aa).

The 181-residue stretch at 2–182 folds into the KARI N-terminal Rossmann domain; it reads TDIVYDKDAD…GGLRAGGIRT (181 aa). Residues 25 to 28, lysine 48, serine 51, serine 53, and 83 to 86 each bind NADP(+); these read YGSQ and DQHQ. Histidine 108 is a catalytic residue. Glycine 134 serves as a coordination point for NADP(+). Positions 183-328 constitute a KARI C-terminal knotted domain; sequence TFTEETETDL…RELRKLFAWN (146 aa). The Mg(2+) site is built by aspartate 191, glutamate 195, glutamate 227, and glutamate 231. Serine 252 lines the substrate pocket.

This sequence belongs to the ketol-acid reductoisomerase family. Mg(2+) serves as cofactor.

It catalyses the reaction (2R)-2,3-dihydroxy-3-methylbutanoate + NADP(+) = (2S)-2-acetolactate + NADPH + H(+). It carries out the reaction (2R,3R)-2,3-dihydroxy-3-methylpentanoate + NADP(+) = (S)-2-ethyl-2-hydroxy-3-oxobutanoate + NADPH + H(+). The protein operates within amino-acid biosynthesis; L-isoleucine biosynthesis; L-isoleucine from 2-oxobutanoate: step 2/4. It participates in amino-acid biosynthesis; L-valine biosynthesis; L-valine from pyruvate: step 2/4. Involved in the biosynthesis of branched-chain amino acids (BCAA). Catalyzes an alkyl-migration followed by a ketol-acid reduction of (S)-2-acetolactate (S2AL) to yield (R)-2,3-dihydroxy-isovalerate. In the isomerase reaction, S2AL is rearranged via a Mg-dependent methyl migration to produce 3-hydroxy-3-methyl-2-ketobutyrate (HMKB). In the reductase reaction, this 2-ketoacid undergoes a metal-dependent reduction by NADPH to yield (R)-2,3-dihydroxy-isovalerate. This chain is Ketol-acid reductoisomerase (NADP(+)), found in Clavibacter sepedonicus (Clavibacter michiganensis subsp. sepedonicus).